The sequence spans 428 residues: tRNA modification GTPase MnmE (428 aa).

Residues arginine 20, glutamate 77, and lysine 117 each coordinate (6S)-5-formyl-5,6,7,8-tetrahydrofolate. In terms of domain architecture, TrmE-type G spans 213 to 351 (GFEIALVGAP…LLEKIRSVFS (139 aa)). Asparagine 223 is a binding site for K(+). GTP contacts are provided by residues 223–228 (NAGKST), 242–248 (SEIAGTT), and 267–270 (DTAG). Serine 227 is a binding site for Mg(2+). Residues serine 242, isoleucine 244, and threonine 247 each coordinate K(+). Threonine 248 is a Mg(2+) binding site. Residue lysine 428 coordinates (6S)-5-formyl-5,6,7,8-tetrahydrofolate.

It belongs to the TRAFAC class TrmE-Era-EngA-EngB-Septin-like GTPase superfamily. TrmE GTPase family. In terms of assembly, homodimer. Heterotetramer of two MnmE and two MnmG subunits. Requires K(+) as cofactor.

It localises to the cytoplasm. Exhibits a very high intrinsic GTPase hydrolysis rate. Involved in the addition of a carboxymethylaminomethyl (cmnm) group at the wobble position (U34) of certain tRNAs, forming tRNA-cmnm(5)s(2)U34. The sequence is that of tRNA modification GTPase MnmE from Roseobacter denitrificans (strain ATCC 33942 / OCh 114) (Erythrobacter sp. (strain OCh 114)).